Consider the following 391-residue polypeptide: MSRVGVVLLNLGGPERIQDVGPFLYNLFADPEIIRLPSPALQKPLAWLISTLRSGKSQEAYRSIGGGSPLRRITEQQARELQSLLRQRGIDATSYVAMRYWHPFTESAVADIKADGMDEVVVLPLYPHFSISTSGSSFRELQRLRQADPAFEKLPIRCIRSWFDHPGYVKAMAELIAAEVRNSDDPTKAHVFFSAHGVPKSYVEEAGDPYQKEIETCTGLIMKELAVQMGHDNPFTLAYQSRVGPVEWLKPYTEEALEELGQAKTNDLVVVPISFVSEHIETLEEIDIEYRELATEAGVVNFRRVRALDTYAPFIEGLADLVATSLQGPEVSLDAAAELPNKVKLYPQEKWEWGWNNSSEVWNGRLAMVGFSAFLLELISGQGPLHALGLL.

Fe cation-binding residues include H196 and E281.

Belongs to the ferrochelatase family.

The protein localises to the cytoplasm. The enzyme catalyses heme b + 2 H(+) = protoporphyrin IX + Fe(2+). The protein operates within porphyrin-containing compound metabolism; protoheme biosynthesis; protoheme from protoporphyrin-IX: step 1/1. Functionally, catalyzes the ferrous insertion into protoporphyrin IX. This is Ferrochelatase from Synechococcus sp. (strain CC9605).